A 399-amino-acid polypeptide reads, in one-letter code: MAKEKFVKNKPHVNVGTIGHVDHGKTTLSAAISAVLATKGLAELKDYDNIDNAPEEKERGITIATSHIEYETENRHYAHVDCPGHADYVKNMITGAAQMDGAILVVSAADGPMPQTREHILLSRQVGVHYIVVFLNKQDMVDDAELLELVEMEVRELLSQYDFPGDDTPIIAGSALKALEEAKAGNVGEWGEKVLKLMEEVDKYIPTPQRDTEKTFLMPVEDVFSIAGRGTVVTGRVERGVVQVGDEVEIVGIRDTQKTTVTGVEMFRKELDKGEAGDNVGILLRGTKKEEVERGMVLCKPGSITPHKKFEGEIYVLSKDEGGRHTPFFNGYRPQFYVRTTDVTGSIELPSGVEMVMPGDNVKITVELIAPVALEDGTRFAIREGGRTVGSGVVTKIIE.

One can recognise a tr-type G domain in the interval 10-209; that stretch reads KPHVNVGTIG…EVDKYIPTPQ (200 aa). The interval 19 to 26 is G1; that stretch reads GHVDHGKT. 19-26 serves as a coordination point for GTP; the sequence is GHVDHGKT. A Mg(2+)-binding site is contributed by Thr-26. Positions 60 to 64 are G2; that stretch reads GITIA. The segment at 81-84 is G3; that stretch reads DCPG. GTP is bound by residues 81-85 and 136-139; these read DCPGH and NKQD. Residues 136–139 are G4; sequence NKQD. The tract at residues 174–176 is G5; that stretch reads SAL.

Belongs to the TRAFAC class translation factor GTPase superfamily. Classic translation factor GTPase family. EF-Tu/EF-1A subfamily. Monomer.

Its subcellular location is the cytoplasm. It catalyses the reaction GTP + H2O = GDP + phosphate + H(+). Functionally, GTP hydrolase that promotes the GTP-dependent binding of aminoacyl-tRNA to the A-site of ribosomes during protein biosynthesis. The sequence is that of Elongation factor Tu from Helicobacter hepaticus (strain ATCC 51449 / 3B1).